The sequence spans 611 residues: Probable inactive purple acid phosphatase 27 (611 aa).

The first 18 residues, Met-1–Ser-18, serve as a signal peptide directing secretion. N-linked (GlcNAc...) asparagine glycosylation is found at Asn-263 and Asn-271. A Fe cation-binding site is contributed by Asp-293. Asn-314 is a glycosylation site (N-linked (GlcNAc...) asparagine). The Fe cation site is built by Asp-334 and Tyr-337. A Zn(2+)-binding site is contributed by Asp-334. 3 residues coordinate Zn(2+): Asn-367, His-456, and His-498. Residue Asn-367 participates in substrate binding. His-498–His-500 is a substrate binding site. Residue His-500 coordinates Fe cation.

It belongs to the metallophosphoesterase superfamily. Purple acid phosphatase family. As to quaternary structure, homodimer. Requires Fe cation as cofactor. The cofactor is Zn(2+). In terms of tissue distribution, expressed in roots, stems, leaves, flowers and siliques.

The protein localises to the secreted. The sequence is that of Probable inactive purple acid phosphatase 27 (PAP27) from Arabidopsis thaliana (Mouse-ear cress).